The sequence spans 107 residues: UPF0145 protein YbjQ (107 aa).

This sequence belongs to the UPF0145 family.

The sequence is that of UPF0145 protein YbjQ from Escherichia coli (strain SMS-3-5 / SECEC).